A 308-amino-acid polypeptide reads, in one-letter code: Ribosomal RNA small subunit methyltransferase H (308 aa).

Residues 32–34 (GGH), D52, F78, D100, and Q107 each bind S-adenosyl-L-methionine.

This sequence belongs to the methyltransferase superfamily. RsmH family.

It localises to the cytoplasm. The enzyme catalyses cytidine(1402) in 16S rRNA + S-adenosyl-L-methionine = N(4)-methylcytidine(1402) in 16S rRNA + S-adenosyl-L-homocysteine + H(+). Its function is as follows. Specifically methylates the N4 position of cytidine in position 1402 (C1402) of 16S rRNA. The polypeptide is Ribosomal RNA small subunit methyltransferase H (Legionella pneumophila (strain Corby)).